Here is a 365-residue protein sequence, read N- to C-terminus: Chorismate synthase (365 aa).

Arg-48 contributes to the NADP(+) binding site. FMN contacts are provided by residues 125–127 (RSS), 238–239 (NA), Gly-278, 293–297 (KPTSS), and Arg-319.

It belongs to the chorismate synthase family. As to quaternary structure, homotetramer. The cofactor is FMNH2.

The catalysed reaction is 5-O-(1-carboxyvinyl)-3-phosphoshikimate = chorismate + phosphate. Its pathway is metabolic intermediate biosynthesis; chorismate biosynthesis; chorismate from D-erythrose 4-phosphate and phosphoenolpyruvate: step 7/7. In terms of biological role, catalyzes the anti-1,4-elimination of the C-3 phosphate and the C-6 proR hydrogen from 5-enolpyruvylshikimate-3-phosphate (EPSP) to yield chorismate, which is the branch point compound that serves as the starting substrate for the three terminal pathways of aromatic amino acid biosynthesis. This reaction introduces a second double bond into the aromatic ring system. In Marinomonas sp. (strain MWYL1), this protein is Chorismate synthase.